The primary structure comprises 520 residues: Mu-like prophage FluMu protein gp29 (520 aa).

This sequence to phage Mu protein gp29.

The protein is Mu-like prophage FluMu protein gp29 of Haemophilus influenzae (strain ATCC 51907 / DSM 11121 / KW20 / Rd).